Consider the following 60-residue polypeptide: Putative potassium channel blocker TXKS1 (60 aa).

An N-terminal signal peptide occupies residues 1–28 (MNRLTTIILMLIVINVIMDDISESKVAA). Cystine bridges form between C32–C49, C35–C55, and C39–C57. K59 bears the Lysine amide mark.

As to expression, expressed by the venom gland.

It localises to the secreted. Its function is as follows. Inhibits potassium channels. In Olivierus martensii (Manchurian scorpion), this protein is Putative potassium channel blocker TXKS1.